The following is a 186-amino-acid chain: Ribosome-recycling factor (186 aa).

This sequence belongs to the RRF family.

It is found in the cytoplasm. Functionally, responsible for the release of ribosomes from messenger RNA at the termination of protein biosynthesis. May increase the efficiency of translation by recycling ribosomes from one round of translation to another. The sequence is that of Ribosome-recycling factor from Paracidovorax citrulli (strain AAC00-1) (Acidovorax citrulli).